The following is a 397-amino-acid chain: Anhydro-N-acetylmuramic acid kinase (397 aa).

ATP is bound at residue 21–28 (GTSLDGVD). Residues 373 to 384 (TPTNLPSVTGAS) are compositionally biased toward polar residues. Residues 373 to 397 (TPTNLPSVTGASARTPLGSLSVPGP) form a disordered region.

It belongs to the anhydro-N-acetylmuramic acid kinase family.

It carries out the reaction 1,6-anhydro-N-acetyl-beta-muramate + ATP + H2O = N-acetyl-D-muramate 6-phosphate + ADP + H(+). It participates in amino-sugar metabolism; 1,6-anhydro-N-acetylmuramate degradation. The protein operates within cell wall biogenesis; peptidoglycan recycling. Its function is as follows. Catalyzes the specific phosphorylation of 1,6-anhydro-N-acetylmuramic acid (anhMurNAc) with the simultaneous cleavage of the 1,6-anhydro ring, generating MurNAc-6-P. Is required for the utilization of anhMurNAc either imported from the medium or derived from its own cell wall murein, and thus plays a role in cell wall recycling. The chain is Anhydro-N-acetylmuramic acid kinase from Salinibacter ruber (strain DSM 13855 / M31).